Reading from the N-terminus, the 355-residue chain is 3-isopropylmalate dehydrogenase (355 aa).

77 to 90 provides a ligand contact to NAD(+); sequence GAKWDNLPREKRPE. Positions 97, 107, 135, and 220 each coordinate substrate. Aspartate 220, aspartate 244, and aspartate 248 together coordinate Mg(2+). 277–289 contributes to the NAD(+) binding site; the sequence is GSAPDIAGQGIAN.

Belongs to the isocitrate and isopropylmalate dehydrogenases family. LeuB type 1 subfamily. In terms of assembly, homodimer. Mg(2+) serves as cofactor. Requires Mn(2+) as cofactor.

Its subcellular location is the cytoplasm. The catalysed reaction is (2R,3S)-3-isopropylmalate + NAD(+) = 4-methyl-2-oxopentanoate + CO2 + NADH. The protein operates within amino-acid biosynthesis; L-leucine biosynthesis; L-leucine from 3-methyl-2-oxobutanoate: step 3/4. In terms of biological role, catalyzes the oxidation of 3-carboxy-2-hydroxy-4-methylpentanoate (3-isopropylmalate) to 3-carboxy-4-methyl-2-oxopentanoate. The product decarboxylates to 4-methyl-2 oxopentanoate. In Sulfurimonas denitrificans (strain ATCC 33889 / DSM 1251) (Thiomicrospira denitrificans (strain ATCC 33889 / DSM 1251)), this protein is 3-isopropylmalate dehydrogenase.